A 152-amino-acid chain; its full sequence is Small ribosomal subunit protein uS11 (152 aa).

The disordered stretch occupies residues 133–152; the sequence is VTPIPTDSTRRKSGHRGRRL. Basic residues predominate over residues 143–152; it reads RKSGHRGRRL.

Belongs to the universal ribosomal protein uS11 family. As to quaternary structure, component of the small ribosomal subunit. Part of the small subunit (SSU) processome, composed of more than 70 proteins and the RNA chaperone small nucleolar RNA (snoRNA) U3.

It is found in the cytoplasm. Its subcellular location is the nucleus. The protein resides in the nucleolus. In terms of biological role, component of the small ribosomal subunit. The ribosome is a large ribonucleoprotein complex responsible for the synthesis of proteins in the cell. Part of the small subunit (SSU) processome, first precursor of the small eukaryotic ribosomal subunit. During the assembly of the SSU processome in the nucleolus, many ribosome biogenesis factors, an RNA chaperone and ribosomal proteins associate with the nascent pre-rRNA and work in concert to generate RNA folding, modifications, rearrangements and cleavage as well as targeted degradation of pre-ribosomal RNA by the RNA exosome. This chain is Small ribosomal subunit protein uS11 (rps14), found in Dictyostelium discoideum (Social amoeba).